The sequence spans 120 residues: NAD(P)H-quinone oxidoreductase subunit 3, chloroplastic (120 aa).

Helical transmembrane passes span 9-29 (FFWA…LISG), 64-84 (MFAL…PWAM), and 88-108 (VLGV…IIGL).

The protein belongs to the complex I subunit 3 family. In terms of assembly, NDH is composed of at least 16 different subunits, 5 of which are encoded in the nucleus.

The protein resides in the plastid. It localises to the chloroplast thylakoid membrane. It carries out the reaction a plastoquinone + NADH + (n+1) H(+)(in) = a plastoquinol + NAD(+) + n H(+)(out). The enzyme catalyses a plastoquinone + NADPH + (n+1) H(+)(in) = a plastoquinol + NADP(+) + n H(+)(out). In terms of biological role, NDH shuttles electrons from NAD(P)H:plastoquinone, via FMN and iron-sulfur (Fe-S) centers, to quinones in the photosynthetic chain and possibly in a chloroplast respiratory chain. The immediate electron acceptor for the enzyme in this species is believed to be plastoquinone. Couples the redox reaction to proton translocation, and thus conserves the redox energy in a proton gradient. The polypeptide is NAD(P)H-quinone oxidoreductase subunit 3, chloroplastic (Nicotiana tabacum (Common tobacco)).